The primary structure comprises 43 residues: S-layer protein 1 (43 aa).

It is found in the secreted. The protein resides in the cell wall. The protein localises to the S-layer. Functionally, the S-layer is a paracrystalline mono-layered assembly of proteins which coat the surface of bacteria. This is S-layer protein 1 from Bacillus thuringiensis subsp. konkukian.